A 486-amino-acid polypeptide reads, in one-letter code: Ribulose bisphosphate carboxylase large chain, chromosomal (486 aa).

Substrate contacts are provided by asparagine 126 and threonine 176. The active-site Proton acceptor is the lysine 178. Position 180 (lysine 180) interacts with substrate. Mg(2+) contacts are provided by lysine 204, aspartate 206, and glutamate 207. Lysine 204 bears the N6-carboxylysine mark. Histidine 296 (proton acceptor) is an active-site residue. Positions 297, 329, and 381 each coordinate substrate.

Belongs to the RuBisCO large chain family. Type I subfamily. In terms of assembly, heterohexadecamer of 8 large chains and 8 small chains; disulfide-linked. The disulfide link is formed within the large subunit homodimers. It depends on Mg(2+) as a cofactor. The disulfide bond which can form between Cys-278 in the large chain dimeric partners within the hexadecamer appears to be associated with oxidative stress and protein turnover.

The enzyme catalyses 2 (2R)-3-phosphoglycerate + 2 H(+) = D-ribulose 1,5-bisphosphate + CO2 + H2O. The catalysed reaction is D-ribulose 1,5-bisphosphate + O2 = 2-phosphoglycolate + (2R)-3-phosphoglycerate + 2 H(+). Its function is as follows. RuBisCO catalyzes two reactions: the carboxylation of D-ribulose 1,5-bisphosphate, the primary event in carbon dioxide fixation, as well as the oxidative fragmentation of the pentose substrate. Both reactions occur simultaneously and in competition at the same active site. The sequence is that of Ribulose bisphosphate carboxylase large chain, chromosomal (cbbL1) from Cupriavidus necator (strain ATCC 17699 / DSM 428 / KCTC 22496 / NCIMB 10442 / H16 / Stanier 337) (Ralstonia eutropha).